A 234-amino-acid chain; its full sequence is Sugar fermentation stimulation protein homolog (234 aa).

This sequence belongs to the SfsA family.

The protein is Sugar fermentation stimulation protein homolog of Shewanella loihica (strain ATCC BAA-1088 / PV-4).